We begin with the raw amino-acid sequence, 379 residues long: MNGFNVRNENNFNSWKIKIQSAPRFESVFDLATDRQRCTPDEVKNNSLWSKYMFPKPFAPTTLKSYKSRFIKIVYCSVDDVHLEDMSYSLDKEFDSIENQTLLIDPQELCRRMLELRSVTKETLQLTINFYTNMMNLPEYKIPRMVMLPRDKELKNIREKEKNLMLKNVIDTILNFINDKIKMLNSDYVHDRGLIRGAIVFCIMLGTGMRINEARQLSVDDLNVLIKRGKLHSDTINLKRKRSRNNTLNNIKMKPLELAREIYSRNPTILQISKNTSTPFKDFRRLLEESGVEMERPRSNMIRHYLSSNLYNSGVPLQKVAKLMNHESSASTKHYLNKYNIGLDETSSEEENNNDDDDAQHNRNSSGSSGESLLYYRNE.

The 180-residue stretch at 169–348 (VIDTILNFIN…YNIGLDETSS (180 aa)) folds into the Tyr recombinase domain. Residues Arg210, Lys239, Arg303, and His326 contribute to the active site. Catalysis depends on Tyr335, which acts as the O-(3'-phospho-DNA)-tyrosine intermediate. Residues 346–358 (TSSEEENNNDDDD) are compositionally biased toward acidic residues. The interval 346–379 (TSSEEENNNDDDDAQHNRNSSGSSGESLLYYRNE) is disordered. The span at 362-379 (NRNSSGSSGESLLYYRNE) shows a compositional bias: low complexity.

This sequence belongs to the 'phage' integrase family.

Its function is as follows. Plays a role in nucleocapsid assembly and serves an essential function during the final stages of the DNA packaging process. Participates in the processing of branched DNA molecules at the late stages of viral genome replication. In Lepidoptera (butterflies and moths), this protein is Very late expression factor 1 (VLF-1).